Here is a 463-residue protein sequence, read N- to C-terminus: A-type ATP synthase subunit B (463 aa).

It belongs to the ATPase alpha/beta chains family. In terms of assembly, has multiple subunits with at least A(3), B(3), C, D, E, F, H, I and proteolipid K(x).

It localises to the cell membrane. Functionally, component of the A-type ATP synthase that produces ATP from ADP in the presence of a proton gradient across the membrane. The B chain is a regulatory subunit. The polypeptide is A-type ATP synthase subunit B (Aeropyrum pernix (strain ATCC 700893 / DSM 11879 / JCM 9820 / NBRC 100138 / K1)).